The primary structure comprises 288 residues: Phenazine biosynthesis-like domain-containing protein (288 aa).

Residue Glu46 is part of the active site.

This sequence belongs to the PhzF family. Interacts with UNRIP/MAWD.

This Rattus norvegicus (Rat) protein is Phenazine biosynthesis-like domain-containing protein (Pbld).